A 216-amino-acid chain; its full sequence is Uracil-DNA glycosylase (216 aa).

The active-site Proton acceptor is Asp60.

It belongs to the uracil-DNA glycosylase (UDG) superfamily. UNG family.

It is found in the cytoplasm. The enzyme catalyses Hydrolyzes single-stranded DNA or mismatched double-stranded DNA and polynucleotides, releasing free uracil.. Its function is as follows. Excises uracil residues from the DNA which can arise as a result of misincorporation of dUMP residues by DNA polymerase or due to deamination of cytosine. This is Uracil-DNA glycosylase from Psychromonas ingrahamii (strain DSM 17664 / CCUG 51855 / 37).